The following is a 561-amino-acid chain: Oxygen-dependent choline dehydrogenase (561 aa).

Aspartate 7–glutamate 36 is an FAD binding site. The active-site Proton acceptor is histidine 474.

It belongs to the GMC oxidoreductase family. It depends on FAD as a cofactor.

It catalyses the reaction choline + A = betaine aldehyde + AH2. The enzyme catalyses betaine aldehyde + NAD(+) + H2O = glycine betaine + NADH + 2 H(+). Its pathway is amine and polyamine biosynthesis; betaine biosynthesis via choline pathway; betaine aldehyde from choline (cytochrome c reductase route): step 1/1. Involved in the biosynthesis of the osmoprotectant glycine betaine. Catalyzes the oxidation of choline to betaine aldehyde and betaine aldehyde to glycine betaine at the same rate. The protein is Oxygen-dependent choline dehydrogenase of Paraburkholderia xenovorans (strain LB400).